Here is a 496-residue protein sequence, read N- to C-terminus: Aspartyl/glutamyl-tRNA(Asn/Gln) amidotransferase subunit B (496 aa).

The interval 475 to 496 (TGGSADPSKVNTLLREQLEDKK) is disordered.

The protein belongs to the GatB/GatE family. GatB subfamily. Heterotrimer of A, B and C subunits.

The enzyme catalyses L-glutamyl-tRNA(Gln) + L-glutamine + ATP + H2O = L-glutaminyl-tRNA(Gln) + L-glutamate + ADP + phosphate + H(+). The catalysed reaction is L-aspartyl-tRNA(Asn) + L-glutamine + ATP + H2O = L-asparaginyl-tRNA(Asn) + L-glutamate + ADP + phosphate + 2 H(+). In terms of biological role, allows the formation of correctly charged Asn-tRNA(Asn) or Gln-tRNA(Gln) through the transamidation of misacylated Asp-tRNA(Asn) or Glu-tRNA(Gln) in organisms which lack either or both of asparaginyl-tRNA or glutaminyl-tRNA synthetases. The reaction takes place in the presence of glutamine and ATP through an activated phospho-Asp-tRNA(Asn) or phospho-Glu-tRNA(Gln). This chain is Aspartyl/glutamyl-tRNA(Asn/Gln) amidotransferase subunit B, found in Haloquadratum walsbyi (strain DSM 16790 / HBSQ001).